Here is a 2212-residue protein sequence, read N- to C-terminus: RNA-directed RNA polymerase L (2212 aa).

The tract at residues 30-288 (KDALLSQVHP…SHEENDSLDC (259 aa)) is endonuclease. 3 residues coordinate Mn(2+): E55, D93, and E106. Residue K119 is part of the active site. Residues 922 to 942 (MKSSDAREERLQDPKRNEKNA) form a disordered region. Over residues 923-942 (KSSDAREERLQDPKRNEKNA) the composition is skewed to basic and acidic residues. One can recognise a RdRp catalytic domain in the interval 1175–1371 (CDMKMAVNNG…YLSSKLNKFV (197 aa)). D1333 contributes to the Mg(2+) binding site.

Belongs to the Bunyavirales RNA polymerase family. In terms of assembly, homomultimer; the oligomeric structure is essential for the polymerase activity. Interacts with nucleoprotein N. Interacts with protein Z; this interaction inhibits viral transcription and replication, Z partially blocks the product exit tunnel for the releasing nascent RNA product. Mn(2+) is required as a cofactor. Requires Mg(2+) as cofactor.

Its subcellular location is the virion. It is found in the host cytoplasm. The catalysed reaction is RNA(n) + a ribonucleoside 5'-triphosphate = RNA(n+1) + diphosphate. RNA-dependent RNA polymerase, which is responsible for the replication and transcription of the viral RNA genome using antigenomic RNA as an intermediate. During transcription, synthesizes subgenomic RNAs and assures their capping by a cap-snatching mechanism, which involves the endonuclease activity cleaving the host capped pre-mRNAs. These short capped RNAs are then used as primers for viral transcription. The 3'-end of subgenomic mRNAs molecules are heterogeneous and not polyadenylated. The replicase function is to direct synthesis of antigenomic and genomic RNA which are encapsidated and non capped. As a consequence of the use of the same enzyme for both transcription and replication, these mechanisms need to be well coordinated. These processes may be regulated by proteins N and Z in a dose-dependent manner. Z protein inhibits the viral polymerase L und thus the viral transcription and RNA synthesis. This is RNA-directed RNA polymerase L from Sabia mammarenavirus (isolate Human/Brasil/SPH114202/1990) (SABV).